Here is a 397-residue protein sequence, read N- to C-terminus: 1-deoxy-D-xylulose 5-phosphate reductoisomerase (397 aa).

Positions 17, 18, 19, 20, 47, and 130 each coordinate NADPH. 1-deoxy-D-xylulose 5-phosphate is bound at residue K131. E132 provides a ligand contact to NADPH. Position 156 (D156) interacts with Mn(2+). The 1-deoxy-D-xylulose 5-phosphate site is built by S157, E158, S182, and H205. E158 serves as a coordination point for Mn(2+). An NADPH-binding site is contributed by G211. The 1-deoxy-D-xylulose 5-phosphate site is built by S218, N223, K224, and E227. E227 contacts Mn(2+).

The protein belongs to the DXR family. Mg(2+) is required as a cofactor. Mn(2+) serves as cofactor.

It catalyses the reaction 2-C-methyl-D-erythritol 4-phosphate + NADP(+) = 1-deoxy-D-xylulose 5-phosphate + NADPH + H(+). The protein operates within isoprenoid biosynthesis; isopentenyl diphosphate biosynthesis via DXP pathway; isopentenyl diphosphate from 1-deoxy-D-xylulose 5-phosphate: step 1/6. In terms of biological role, catalyzes the NADPH-dependent rearrangement and reduction of 1-deoxy-D-xylulose-5-phosphate (DXP) to 2-C-methyl-D-erythritol 4-phosphate (MEP). This chain is 1-deoxy-D-xylulose 5-phosphate reductoisomerase, found in Rhizobium rhizogenes (strain K84 / ATCC BAA-868) (Agrobacterium radiobacter).